The primary structure comprises 228 residues: CD302 antigen (228 aa).

An N-terminal signal peptide occupies residues 1 to 20; the sequence is MPHAALSSLVLLSLATAIFA. Topologically, residues 21–165 are extracellular; sequence DCPSSIWVQF…YDKKYLSDNH (145 aa). One can recognise a C-type lectin domain in the interval 30–149; that stretch reads FQGSCYTFLQ…CEMSSVTGTL (120 aa). Asn107 carries an N-linked (GlcNAc...) asparagine glycan. Cys125 and Cys140 form a disulfide bridge. Residues 166–186 form a helical membrane-spanning segment; sequence ILISTLVIASTVTLAVLGAVI. Topologically, residues 187–228 are cytoplasmic; that stretch reads WFLYRRSARSGFTSFSPAPQSPYSDGCALVVSEEDEYSVQLD.

The protein resides in the membrane. The protein localises to the cell projection. Its subcellular location is the filopodium. It localises to the cytoplasm. It is found in the cell cortex. The protein resides in the microvillus. Potential multifunctional C-type lectin receptor that may play roles in endocytosis and phagocytosis as well as in cell adhesion and migration. The protein is CD302 antigen (Cd302) of Rattus norvegicus (Rat).